We begin with the raw amino-acid sequence, 120 residues long: MPMVRVATNLPNEKVPVDFEIRLTDLLARSMGKPRERIAVEIAAGARLVHGATHDPVTVISIKSIGAVSAEDNIRNTAAITEFCGKELGLPKDKVVITFHDLPPATVGFNGTTVAEANKK.

This sequence belongs to the MIF family.

This is MIF-like protein mif-2 (mif-2) from Caenorhabditis elegans.